Here is a 704-residue protein sequence, read N- to C-terminus: Nucleolar and coiled-body phosphoprotein 1 (704 aa).

The LisH domain occupies 10 to 42 (VPSDLYPLVLGFLRDNQLSEVASKFAKATGATQ). Lys-33 is modified (N6-acetyllysine). The disordered stretch occupies residues 65-638 (KVKLQSNGPV…PFRRVREEEI (574 aa)). Residues Lys-67 and Lys-76 each participate in a glycyl lysine isopeptide (Lys-Gly) (interchain with G-Cter in SUMO2) cross-link. Acidic serine cluster repeat units lie at residues 84 to 95 (SSDSSEDSSEEE) and 127 to 138 (ESSSSEESSEEE). Positions 84–570 (SSDSSEDSSE…GKAGKESEEE (487 aa)) are 11 X 12 AA approximate repeats of an acidic serine cluster. 4 positions are modified to phosphoserine: Ser-87, Ser-88, Ser-91, and Ser-92. The segment covering 87–96 (SSEDSSEEED) has biased composition (acidic residues). Diphosphoserine is present on residues Ser-88 and Ser-91. 2 stretches are compositionally biased toward low complexity: residues 120–132 (KAAA…SSSE) and 149–160 (QQKAVKPQAKAV). Residues 170-181 (SESESDSSSEDE) form an Acidic serine cluster 3 repeat. Acidic residues predominate over residues 170–182 (SESESDSSSEDEA). Low complexity-rich tracts occupy residues 183–207 (PQTQ…KAPA), 215–236 (AQPK…SSSS), and 246–279 (AAPL…SSED). Glycyl lysine isopeptide (Lys-Gly) (interchain with G-Cter in SUMO2) cross-links involve residues Lys-189 and Lys-200. Acidic serine cluster repeat units follow at residues 231-242 (SSSSSSDDSEEE), 274-285 (SSSSEDSSSEEE), and 335-346 (SSEESDSSSEEE). Residues Lys-352 and Lys-357 each participate in a glycyl lysine isopeptide (Lys-Gly) (interchain with G-Cter in SUMO2) cross-link. Phosphoserine occurs at positions 372, 373, and 376. Residues 373–384 (SDSSDSDSSEDE) form an Acidic serine cluster 7 repeat. Residues Lys-399, Lys-405, Lys-410, and Lys-416 each participate in a glycyl lysine isopeptide (Lys-Gly) (interchain with G-Cter in SUMO2) cross-link. Residues 408 to 419 (AAKAVATPKQPA) show a composition bias toward low complexity. Lys-424 bears the N6-acetyllysine; alternate mark. Residue Lys-424 forms a Glycyl lysine isopeptide (Lys-Gly) (interchain with G-Cter in SUMO1); alternate linkage. Residue Lys-424 forms a Glycyl lysine isopeptide (Lys-Gly) (interchain with G-Cter in SUMO2); alternate linkage. Positions 434 to 444 (SSEEESSSSEE) are enriched in acidic residues. One copy of the Acidic serine cluster 8 repeat lies at 434–445 (SSEEESSSSEEE). Glycyl lysine isopeptide (Lys-Gly) (interchain with G-Cter in SUMO2) cross-links involve residues Lys-449 and Lys-461. The residue at position 465 (Ser-465) is a Phosphoserine. Composition is skewed to low complexity over residues 474–485 (AGGDSSSDSESS) and 504–529 (AGAA…SSSE). The Acidic serine cluster 9 repeat unit spans residues 479–490 (SSDSESSSSEEE). Lys-510 participates in a covalent cross-link: Glycyl lysine isopeptide (Lys-Gly) (interchain with G-Cter in SUMO2). Acidic serine cluster repeat units follow at residues 524-535 (SSSSSEDSSEEE) and 559-570 (QNGKAGKESEEE). Ser-567 carries the phosphoserine modification. Lys-584 is covalently cross-linked (Glycyl lysine isopeptide (Lys-Gly) (interchain with G-Cter in SUMO2)). Ser-587 carries the phosphoserine modification. Residue Thr-596 is modified to Phosphothreonine. Lys-609 is covalently cross-linked (Glycyl lysine isopeptide (Lys-Gly) (interchain with G-Cter in SUMO2)). A phosphothreonine mark is found at Thr-612 and Thr-615. Lys-618 is covalently cross-linked (Glycyl lysine isopeptide (Lys-Gly) (interchain with G-Cter in SUMO2)). A phosphoserine mark is found at Ser-627 and Ser-648. Lys-652 participates in a covalent cross-link: Glycyl lysine isopeptide (Lys-Gly) (interchain with G-Cter in SUMO2). Position 668 is an N6-acetyllysine; alternate (Lys-668). A Glycyl lysine isopeptide (Lys-Gly) (interchain with G-Cter in SUMO2); alternate cross-link involves residue Lys-668. Arg-688 is modified (omega-N-methylarginine). Phosphoserine is present on Ser-691. A Glycyl lysine isopeptide (Lys-Gly) (interchain with G-Cter in SUMO2) cross-link involves residue Lys-700. Ser-703 carries the post-translational modification Phosphoserine.

It belongs to the NOLC1 family. As to quaternary structure, interacts with RNA polymerase I 194 kDa subunit (RPA194) and with casein kinase-II. Interacts with DKC1/NAP57, NOP58 and fibrillarin. Undergoes rapid and massive phosphorylation/dephosphorylation cycles on CK2 and PKC sites. NOLC1 is one of the mostly phosphorylated proteins in the cell. Post-translationally, ubiquitinated. Monoubiquitination by the BCR(KBTBD8) complex promotes the formation of a NOLC1-TCOF1 complex that acts as a platform to connect RNA polymerase I with enzymes responsible for ribosomal processing and modification, leading to remodel the translational program of differentiating cells in favor of neural crest specification. In terms of processing, pyrophosphorylated by 5-diphosphoinositol pentakisphosphate (5-IP7). Serine pyrophosphorylation is achieved by Mg(2+)-dependent, but enzyme independent transfer of a beta-phosphate from a inositol pyrophosphate to a pre-phosphorylated serine residue.

Its subcellular location is the cytoplasm. It localises to the nucleus. It is found in the nucleolus. Its function is as follows. Nucleolar protein that acts as a regulator of RNA polymerase I by connecting RNA polymerase I with enzymes responsible for ribosomal processing and modification. Required for neural crest specification: following monoubiquitination by the BCR(KBTBD8) complex, associates with TCOF1 and acts as a platform to connect RNA polymerase I with enzymes responsible for ribosomal processing and modification, leading to remodel the translational program of differentiating cells in favor of neural crest specification. Involved in nucleologenesis, possibly by playing a role in the maintenance of the fundamental structure of the fibrillar center and dense fibrillar component in the nucleolus. It has intrinsic GTPase and ATPase activities. The protein is Nucleolar and coiled-body phosphoprotein 1 of Rattus norvegicus (Rat).